A 286-amino-acid polypeptide reads, in one-letter code: Acyl-CoA-binding domain-containing protein 6 (286 aa).

In terms of domain architecture, ACB spans 32 to 117 (LQCQFEQAAK…VKKLDPDWSP (86 aa)). An acyl-CoA-binding positions include 59-63 (YARYK), K85, and Y104. ANK repeat units lie at residues 182–211 (EGRS…HINM) and 215–244 (EGQT…DPSL).

The protein localises to the cytoplasm. Its subcellular location is the nucleus. Its function is as follows. Binds long-chain acyl-coenzyme A molecules with a strong preference for unsaturated C18:1-CoA. Does not bind fatty acids. Plays a role in protein N-myristoylation. The polypeptide is Acyl-CoA-binding domain-containing protein 6 (acbd6) (Xenopus laevis (African clawed frog)).